Here is a 623-residue protein sequence, read N- to C-terminus: Chaperone protein HtpG (623 aa).

The tract at residues 1 to 336 (MVSKQQTMGF…ASDLPLNISR (336 aa)) is a; substrate-binding. Positions 337–550 (EILQDNKQVE…EQDMGLEMQR (214 aa)) are b. The interval 551-623 (ILQAAGQQVP…NRVNRLLVSS (73 aa)) is c.

The protein belongs to the heat shock protein 90 family. Homodimer.

Its subcellular location is the cytoplasm. Molecular chaperone. Has ATPase activity. The protein is Chaperone protein HtpG of Legionella pneumophila subsp. pneumophila (strain Philadelphia 1 / ATCC 33152 / DSM 7513).